Consider the following 280-residue polypeptide: Four and a half LIM domains protein 3 (280 aa).

At Ser2 the chain carries N-acetylserine. The segment at 7–31 adopts a C4-type zinc-finger fold; that stretch reads CAKCNESLYGRKYIQTDSGPYCVPC. 2 consecutive LIM zinc-binding domains span residues 40-92 and 101-153; these read CAEC…CNDC and CSAC…CVPC. Position 157 is an N6-acetyllysine (Lys157). 2 consecutive LIM zinc-binding domains span residues 162 to 212 and 221 to 275; these read CARC…CVAC and CSSC…CQGC. Lys235 carries the post-translational modification N6-acetyllysine.

Interacts with SOX15; the interaction recruits FHL3 to FOXK1 promoters where it acts as a transcriptional coactivator of FOXK1. Expressed only in skeletal muscle.

The protein resides in the nucleus. Its subcellular location is the cytoplasm. In terms of biological role, recruited by SOX15 to FOXK1 promoters where it acts as a transcriptional coactivator of FOXK1. The polypeptide is Four and a half LIM domains protein 3 (FHL3) (Homo sapiens (Human)).